We begin with the raw amino-acid sequence, 871 residues long: Protein TIC 100 (871 aa).

The interval 1 to 85 is disordered; it reads MANEELTESQ…NANPETNIRR (85 aa). A compositionally biased stretch (polar residues) spans 8–20; it reads ESQQQEDPSQQLP. Positions 30–46 are enriched in low complexity; it reads SDSNSDSDASSQSSGDD. 3 MORN repeats span residues 219–239, 243–257, and 337–352; these read YEGTVWDDLAQGKGVYIAENG, YEGEWLQNDMEGHGV, and YAGQWKHSRMHGCGVY. Asn238 carries the post-translational modification Deamidated asparagine. The stretch at 587–647 forms a coiled coil; it reads MLDGLEKWTE…QEEEKKTEMG (61 aa). Disordered stretches follow at residues 631-654 and 669-721; these read EELKKKEQEEEKKTEMGLTEEDED and KEKI…NSPF. Residues 632 to 645 show a composition bias toward basic and acidic residues; sequence ELKKKEQEEEKKTE. Thr649 carries the phosphothreonine modification. Basic and acidic residues predominate over residues 669 to 683; it reads KEKIQENKQEEKYKD. Residues 684–704 show a composition bias toward acidic residues; sequence DDDEDDDDGDDDDDDDDDDDL.

As to quaternary structure, part of the Tic complex. Component of the 1-MD complex, composed of TIC20-I, TIC214, TIC100 and TIC56. Interacts with the translocating preproteins. Hydrolysis of ATP is essential for the formation of this complex. The 1-MD complex interacts with TIC21. In terms of tissue distribution, preferentially expressed in ovules, and moderately expressed in leaves and siliques.

It localises to the plastid. The protein resides in the chloroplast inner membrane. In terms of biological role, involved in protein precursor import into chloroplasts. May be part of an intermediate translocation complex acting as a protein-conducting channel at the inner envelope. Plays an important role during embryogenesis and chloroplast biogenesis. The sequence is that of Protein TIC 100 from Arabidopsis thaliana (Mouse-ear cress).